A 91-amino-acid chain; its full sequence is Small ribosomal subunit protein uS19 (91 aa).

The disordered stretch occupies residues 1–32 (MPRSIKKGPFIDEHLDRKVQSAQASNSRRPIK). Basic and acidic residues predominate over residues 9–19 (PFIDEHLDRKV).

The protein belongs to the universal ribosomal protein uS19 family.

In terms of biological role, protein S19 forms a complex with S13 that binds strongly to the 16S ribosomal RNA. The chain is Small ribosomal subunit protein uS19 from Acidithiobacillus ferrooxidans (strain ATCC 53993 / BNL-5-31) (Leptospirillum ferrooxidans (ATCC 53993)).